The primary structure comprises 207 residues: Cytidylate kinase (207 aa).

7–15 (GVAASGKSS) is an ATP binding site.

It belongs to the cytidylate kinase family. Type 1 subfamily.

The protein localises to the cytoplasm. The catalysed reaction is CMP + ATP = CDP + ADP. It carries out the reaction dCMP + ATP = dCDP + ADP. This is Cytidylate kinase from Deinococcus deserti (strain DSM 17065 / CIP 109153 / LMG 22923 / VCD115).